The primary structure comprises 82 residues: U24 protein (82 aa).

The PPXY motif signature appears at 7-10; that stretch reads PPSY. The chain crosses the membrane as a helical span at residues 52–72; that stretch reads FIILACLIISVILCLILILHI.

Interacts with host ITCH; this interaction probably mediates ITCH degradation. Interacts probably with NEDD4.

The protein localises to the membrane. Functionally, down-regulates of the TCR/CD3E complex and the transferrin receptor TFRC in host T-cells by blocking them from recycling back to the cell surface. The protein is U24 protein of Homo sapiens (Human).